Consider the following 210-residue polypeptide: A-kinase-interacting protein 1 (210 aa).

2 disordered regions span residues 58–80 (HLEK…ERPP) and 136–162 (QRKD…EASQ).

Interacts with PRKACA and RELA. As to expression, expressed at high levels in adult heart and at lower levels in brain, testis, ovary and skeletal muscle. Up-regulated in some breast cancer cell lines. Isoform 1 and isoform 3 are expressed in fetal brain.

Its subcellular location is the nucleus. Enhances NF-kappa-B transcriptional activity by regulating the nuclear localization of the NF-kappa-B subunit RELA and promoting the phosphorylation of RELA by PRKACA. Regulates the effect of the cAMP-dependent protein kinase signaling pathway on the NF-kappa-B activation cascade. The polypeptide is A-kinase-interacting protein 1 (AKIP1) (Homo sapiens (Human)).